A 140-amino-acid polypeptide reads, in one-letter code: Nucleoside diphosphate kinase (140 aa).

The ATP site is built by K11, F59, R87, T93, R104, and N114. Catalysis depends on H117, which acts as the Pros-phosphohistidine intermediate.

This sequence belongs to the NDK family. As to quaternary structure, homotetramer. The cofactor is Mg(2+).

It localises to the cytoplasm. The catalysed reaction is a 2'-deoxyribonucleoside 5'-diphosphate + ATP = a 2'-deoxyribonucleoside 5'-triphosphate + ADP. It carries out the reaction a ribonucleoside 5'-diphosphate + ATP = a ribonucleoside 5'-triphosphate + ADP. Its function is as follows. Major role in the synthesis of nucleoside triphosphates other than ATP. The ATP gamma phosphate is transferred to the NDP beta phosphate via a ping-pong mechanism, using a phosphorylated active-site intermediate. This is Nucleoside diphosphate kinase from Francisella tularensis subsp. tularensis (strain SCHU S4 / Schu 4).